Consider the following 199-residue polypeptide: Cell division protein SepF (199 aa).

A disordered region spans residues 15–79; the sequence is TEDGDETEVQ…PQPQQKSSTE (65 aa).

Belongs to the SepF family. Homodimer. Interacts with FtsZ.

It localises to the cytoplasm. Functionally, cell division protein that is part of the divisome complex and is recruited early to the Z-ring. Probably stimulates Z-ring formation, perhaps through the cross-linking of FtsZ protofilaments. Its function overlaps with FtsA. The chain is Cell division protein SepF from Streptococcus sanguinis (strain SK36).